The following is a 318-amino-acid chain: Formimidoylglutamase (318 aa).

Positions 130, 155, 157, 159, 246, and 248 each coordinate Mn(2+).

The protein belongs to the arginase family. Mn(2+) serves as cofactor.

The catalysed reaction is N-formimidoyl-L-glutamate + H2O = formamide + L-glutamate. The protein operates within amino-acid degradation; L-histidine degradation into L-glutamate; L-glutamate from N-formimidoyl-L-glutamate (hydrolase route): step 1/1. Its function is as follows. Catalyzes the conversion of N-formimidoyl-L-glutamate to L-glutamate and formamide. The chain is Formimidoylglutamase from Klebsiella pneumoniae subsp. pneumoniae (strain ATCC 700721 / MGH 78578).